The sequence spans 133 residues: MSWTRVVVLSSLTTLLILTFSSVVKSAAVRDDSKAGDPKGAARHVFMPESDASNFFKHRSRRSPRYYSERQAEQRVRLSANERRREYNEEQRNEFENYVEEERDEQNERSREKNEQVREYHYDGLYPRYHWFH.

Residues 1–26 form the signal peptide; the sequence is MSWTRVVVLSSLTTLLILTFSSVVKS. Residues 27–62 constitute a propeptide, ucma-N; the sequence is AAVRDDSKAGDPKGAARHVFMPESDASNFFKHRSRR. The tract at residues 57–116 is disordered; that stretch reads KHRSRRSPRYYSERQAEQRVRLSANERRREYNEEQRNEFENYVEEERDEQNERSREKNEQ. Basic and acidic residues predominate over residues 67–95; the sequence is YSERQAEQRVRLSANERRREYNEEQRNEF. Residues E69, E73, E82, E86, E89, E90, E94, E96, E100, E101, E102, E105, E108, E112, E115, and E119 each carry the 4-carboxyglutamate modification. A coiled-coil region spans residues 88–121; the sequence is NEEQRNEFENYVEEERDEQNERSREKNEQVREYH. Basic and acidic residues predominate over residues 106–116; that stretch reads QNERSREKNEQ.

It belongs to the UCMA family. Post-translationally, proteolytically cleaved by a furin-like convertase to generate a persistent C-terminal fragment found in almost the entire cartilage matrix, and affecting osteoblast differentiation. Sulfated on tyrosine residues.

It is found in the secreted. Its subcellular location is the extracellular space. The protein localises to the extracellular matrix. Its function is as follows. May be involved in the negative control of osteogenic differentiation of osteochondrogenic precursor cells in peripheral zones of fetal cartilage and at the cartilage-bone interface. In Dicentrarchus labrax (European seabass), this protein is Unique cartilage matrix-associated protein (ucma).